The primary structure comprises 390 residues: Transforming growth factor beta-1 proprotein (390 aa).

A signal peptide spans 1 to 29 (MPPSGLRLLPLLLPLLWLLVLTPGRPAAG). Residues 30–74 (LSTCKTIDMELVKRKRIEAIRGQILSKLRLASPPSQGEVPPGPLP) are straightjacket domain. The segment at 75 to 271 (EAVLALYNST…ATPLERAQHL (197 aa)) is arm domain. Residues Asn-82, Asn-136, and Asn-176 are each glycosylated (N-linked (GlcNAc...) asparagine). The interval 226-252 (DSRDNTLQVDINGLSSSRRGDLATIHG) is bowtie tail. Positions 244–246 (RGD) match the Cell attachment site motif. Intrachain disulfides connect Cys-285–Cys-294, Cys-293–Cys-356, Cys-322–Cys-387, and Cys-326–Cys-389.

It belongs to the TGF-beta family. As to quaternary structure, homodimer; disulfide-linked. Interacts with the serine proteases, HTRA1 and HTRA3: the interaction with either inhibits TGFB1-mediated signaling and the HTRA protease activity is required for this inhibition. May interact with THSD4; this interaction may lead to sequestration by FBN1 microfibril assembly and attenuation of TGFB signaling. Interacts with CD109, DPT and ASPN. Interacts with EFEMP2. Interacts with TSKU; the interaction contributes to regulation of the hair cycle. Interacts with TGFBR3. In terms of assembly, homodimer; disulfide-linked. Interacts with transforming growth factor beta-1 (TGF-beta-1) chain; interaction is non-covalent and maintains TGF-beta-1 in a latent state; each latency-associated peptide (LAP) monomer interacts with TGF-beta-1 in the other monomer. Interacts with LTBP1; leading to regulation of TGF-beta-1 activation. Interacts with LRRC32/GARP; leading to regulation of TGF-beta-1 activation on the surface of activated regulatory T-cells (Tregs). Interacts with LRRC33/NRROS; leading to regulation of TGF-beta-1 activation in macrophages and microglia. Interacts (via cell attachment site) with integrins ITGAV and ITGB6 (ITGAV:ITGB6), leading to release of the active TGF-beta-1. Interacts with NREP; the interaction results in a decrease in TGFB1 autoinduction. Interacts with HSP90AB1; inhibits latent TGFB1 activation. Homodimer; disulfide-linked. Interacts with TGF-beta receptors (TGFBR1 and TGFBR2), leading to signal transduction. Post-translationally, transforming growth factor beta-1 proprotein: The precursor proprotein is cleaved in the Golgi apparatus by FURIN to form Transforming growth factor beta-1 (TGF-beta-1) and Latency-associated peptide (LAP) chains, which remain non-covalently linked, rendering TGF-beta-1 inactive. N-glycosylated. Deglycosylation leads to activation of Transforming growth factor beta-1 (TGF-beta-1); mechanisms triggering deglycosylation-driven activation of TGF-beta-1 are however unclear.

Its subcellular location is the secreted. It localises to the extracellular space. The protein localises to the extracellular matrix. Transforming growth factor beta-1 proprotein: Precursor of the Latency-associated peptide (LAP) and Transforming growth factor beta-1 (TGF-beta-1) chains, which constitute the regulatory and active subunit of TGF-beta-1, respectively. Functionally, required to maintain the Transforming growth factor beta-1 (TGF-beta-1) chain in a latent state during storage in extracellular matrix. Associates non-covalently with TGF-beta-1 and regulates its activation via interaction with 'milieu molecules', such as LTBP1, LRRC32/GARP and LRRC33/NRROS, that control activation of TGF-beta-1. Interaction with LRRC33/NRROS regulates activation of TGF-beta-1 in macrophages and microglia. Interaction with LRRC32/GARP controls activation of TGF-beta-1 on the surface of activated regulatory T-cells (Tregs). Interaction with integrins (ITGAV:ITGB6 or ITGAV:ITGB8) results in distortion of the Latency-associated peptide chain and subsequent release of the active TGF-beta-1. Its function is as follows. Multifunctional protein that regulates the growth and differentiation of various cell types and is involved in various processes, such as normal development, immune function, microglia function and responses to neurodegeneration. Activation into mature form follows different steps: following cleavage of the proprotein in the Golgi apparatus, Latency-associated peptide (LAP) and Transforming growth factor beta-1 (TGF-beta-1) chains remain non-covalently linked rendering TGF-beta-1 inactive during storage in extracellular matrix. At the same time, LAP chain interacts with 'milieu molecules', such as LTBP1, LRRC32/GARP and LRRC33/NRROS that control activation of TGF-beta-1 and maintain it in a latent state during storage in extracellular milieus. TGF-beta-1 is released from LAP by integrins (ITGAV:ITGB6 or ITGAV:ITGB8): integrin-binding to LAP stabilizes an alternative conformation of the LAP bowtie tail and results in distortion of the LAP chain and subsequent release of the active TGF-beta-1. Once activated following release of LAP, TGF-beta-1 acts by binding to TGF-beta receptors (TGFBR1 and TGFBR2), which transduce signal. While expressed by many cells types, TGF-beta-1 only has a very localized range of action within cell environment thanks to fine regulation of its activation by Latency-associated peptide chain (LAP) and 'milieu molecules'. Plays an important role in bone remodeling: acts as a potent stimulator of osteoblastic bone formation, causing chemotaxis, proliferation and differentiation in committed osteoblasts. Can promote either T-helper 17 cells (Th17) or regulatory T-cells (Treg) lineage differentiation in a concentration-dependent manner. At high concentrations, leads to FOXP3-mediated suppression of RORC and down-regulation of IL-17 expression, favoring Treg cell development. At low concentrations in concert with IL-6 and IL-21, leads to expression of the IL-17 and IL-23 receptors, favoring differentiation to Th17 cells. Stimulates sustained production of collagen through the activation of CREB3L1 by regulated intramembrane proteolysis (RIP). Mediates SMAD2/3 activation by inducing its phosphorylation and subsequent translocation to the nucleus. Positively regulates odontoblastic differentiation in dental papilla cells, via promotion of IPO7-mediated translocation of phosphorylated SMAD2 to the nucleus and subsequent transcription of target genes. Can induce epithelial-to-mesenchymal transition (EMT) and cell migration in various cell types. This Mustela putorius furo (European domestic ferret) protein is Transforming growth factor beta-1 proprotein (TGFB1).